Reading from the N-terminus, the 182-residue chain is Ribosome-recycling factor (182 aa).

This sequence belongs to the RRF family.

The protein localises to the cytoplasm. In terms of biological role, responsible for the release of ribosomes from messenger RNA at the termination of protein biosynthesis. May increase the efficiency of translation by recycling ribosomes from one round of translation to another. The polypeptide is Ribosome-recycling factor (Prochlorococcus marinus (strain MIT 9515)).